The primary structure comprises 492 residues: MDRLKHALGEATGWLLFLSFLMLVAVALPPQVFDPESKHFIMLIGLIGVWRYSMGIIHFLRGMLFLYVVYPYYRRKVEKLGKDADPSHVFLMVTSFRIDALTTGKVYGSVIKEAINCGYPTTVVCSIVEMSDELLIKSLWEKLDPPDRVKLDFVRIAGTGKRDGLANGFRAISRHMPDEDAVVAVIDGDTVLNEGVVRKTVPLFQDLPQHGWPDHQRILRSAGRLRHERVAQVRFAQRHINMCSMALSHRVLTLTGRMSVFRAVVTDPEFIVDVENDNLDHWRLGRFKFLTGDDKSSWFSLMRLGYDTFYVPDASIHTVEHPPEKRFVKASRKLMFRWYGNNLRQNSRALKLGVQRLGWFTSVVLFDQRVSMWTSLLGLTVAIIGSIKYSIAIFIAYLLWVCSTRLVLTLLLSLSGHPIGPAYPLILYYNQIVGAVVKIHVFFRLDQQSWTRQDTKLNRELASFQSWFNNWSSKAMTFSATSIFIAVLMLSV.

Transmembrane regions (helical) follow at residues 13 to 32, 47 to 69, 379 to 401, and 421 to 443; these read GWLL…PPQV, IGVW…LYVV, LTVA…LLWV, and PAYP…HVFF.

It belongs to the glycosyltransferase 2 family.

It is found in the cell membrane. The protein operates within glycan biosynthesis; alginate biosynthesis. Its function is as follows. Possibly a processive enzyme that polymerizes GDP-mannuronic acid. In Azotobacter vinelandii, this protein is Glycosyltransferase alg8 (alg8).